Consider the following 616-residue polypeptide: Dihydroxy-acid dehydratase (616 aa).

Asp-81 serves as a coordination point for Mg(2+). Cys-122 provides a ligand contact to [2Fe-2S] cluster. Mg(2+)-binding residues include Asp-123 and Lys-124. N6-carboxylysine is present on Lys-124. Residue Cys-195 participates in [2Fe-2S] cluster binding. Glu-491 is a binding site for Mg(2+). The Proton acceptor role is filled by Ser-517.

The protein belongs to the IlvD/Edd family. Homodimer. [2Fe-2S] cluster is required as a cofactor. Requires Mg(2+) as cofactor.

The catalysed reaction is (2R)-2,3-dihydroxy-3-methylbutanoate = 3-methyl-2-oxobutanoate + H2O. It carries out the reaction (2R,3R)-2,3-dihydroxy-3-methylpentanoate = (S)-3-methyl-2-oxopentanoate + H2O. It functions in the pathway amino-acid biosynthesis; L-isoleucine biosynthesis; L-isoleucine from 2-oxobutanoate: step 3/4. The protein operates within amino-acid biosynthesis; L-valine biosynthesis; L-valine from pyruvate: step 3/4. Its function is as follows. Functions in the biosynthesis of branched-chain amino acids. Catalyzes the dehydration of (2R,3R)-2,3-dihydroxy-3-methylpentanoate (2,3-dihydroxy-3-methylvalerate) into 2-oxo-3-methylpentanoate (2-oxo-3-methylvalerate) and of (2R)-2,3-dihydroxy-3-methylbutanoate (2,3-dihydroxyisovalerate) into 2-oxo-3-methylbutanoate (2-oxoisovalerate), the penultimate precursor to L-isoleucine and L-valine, respectively. This chain is Dihydroxy-acid dehydratase, found in Escherichia coli O127:H6 (strain E2348/69 / EPEC).